Consider the following 376-residue polypeptide: MGAACPRRPIGARILPMVIYCFDPERGRRWTERLTGIRPQFACVLGFTETALIPGISAAGLTPEARRFTALGDGEVLLAGRSARLPSAPEGYPSPVVISRAVVELLGLPVRVFDAGLPETCKDAVHLGGSPARCLSTGRALAPDTVAHLFSQGLAWGERLADEGGYLAIGECVAGGTTTALAVLRALGHAADGLVSSSHPRCNHTQKGALVDLALQKADLPIDASALAILAALGDPAQPAIAGMAIAASHRVPVLLAGGTQMLAVAAVAERLAAEAGLGWRPEQIAVGTTRWVAADPTADAALLAARIGVVPLLAAALDFSHSRHPALQAYERGYVKEGVGAGGLAIAAELAGIDSERLLAAIDDWLDRWNLPTPV.

The protein belongs to the UPF0284 family.

The chain is UPF0284 protein glr4139 from Gloeobacter violaceus (strain ATCC 29082 / PCC 7421).